The sequence spans 150 residues: Catabolic 3-dehydroquinase 1 (150 aa).

Tyrosine 24 acts as the Proton acceptor in catalysis. Substrate contacts are provided by asparagine 75, histidine 81, and aspartate 88. Histidine 101 serves as the catalytic Proton donor. Residues 102-103 and arginine 112 each bind substrate; that span reads VS.

Belongs to the type-II 3-dehydroquinase family. As to quaternary structure, homododecamer. Adopts a ring-like structure, composed of an arrangement of two hexameric rings stacked on top of one another.

The enzyme catalyses 3-dehydroquinate = 3-dehydroshikimate + H2O. The protein operates within aromatic compound metabolism; 3,4-dihydroxybenzoate biosynthesis; 3,4-dihydroxybenzoate from 3-dehydroquinate: step 1/2. Is involved in the catabolism of quinate. Allows the utilization of quinate as carbon source via the beta-ketoadipate pathway. The chain is Catabolic 3-dehydroquinase 1 from Neosartorya fischeri (strain ATCC 1020 / DSM 3700 / CBS 544.65 / FGSC A1164 / JCM 1740 / NRRL 181 / WB 181) (Aspergillus fischerianus).